The sequence spans 61 residues: Large ribosomal subunit protein bL32 (61 aa).

Basic residues predominate over residues 1–16 (MAVPRRKTSPSRRGMR). The segment at 1-61 (MAVPRRKTSP…RQVLKVKKED (61 aa)) is disordered. Residues 17–44 (RSADALKKPTYVEDKDSGELRRPHHLDL) show a composition bias toward basic and acidic residues.

It belongs to the bacterial ribosomal protein bL32 family.

The polypeptide is Large ribosomal subunit protein bL32 (Afipia carboxidovorans (strain ATCC 49405 / DSM 1227 / KCTC 32145 / OM5) (Oligotropha carboxidovorans)).